The sequence spans 262 residues: Ribose-5-phosphate isomerase A (262 aa).

Substrate is bound by residues 33–36 (TGST), 89–92 (DGAD), and 102–105 (KGGG). The active-site Proton acceptor is the glutamate 111. Lysine 129 serves as a coordination point for substrate.

It belongs to the ribose 5-phosphate isomerase family. As to quaternary structure, homodimer.

It catalyses the reaction aldehydo-D-ribose 5-phosphate = D-ribulose 5-phosphate. It participates in carbohydrate degradation; pentose phosphate pathway; D-ribose 5-phosphate from D-ribulose 5-phosphate (non-oxidative stage): step 1/1. Catalyzes the reversible conversion of ribose-5-phosphate to ribulose 5-phosphate. The chain is Ribose-5-phosphate isomerase A from Ruegeria sp. (strain TM1040) (Silicibacter sp.).